The primary structure comprises 362 residues: Adenosine deaminase (362 aa).

Residues His-19 and His-21 each coordinate Zn(2+). Positions 21, 23, and 181 each coordinate substrate. A Zn(2+)-binding site is contributed by His-208. Glu-211 serves as the catalytic Proton donor. Asp-300 provides a ligand contact to Zn(2+).

The protein belongs to the metallo-dependent hydrolases superfamily. Adenosine and AMP deaminases family. Adenosine deaminase subfamily. Zn(2+) serves as cofactor.

The catalysed reaction is adenosine + H2O + H(+) = inosine + NH4(+). It carries out the reaction 2'-deoxyadenosine + H2O + H(+) = 2'-deoxyinosine + NH4(+). Its function is as follows. Catalyzes the hydrolytic deamination of adenosine and 2-deoxyadenosine. This chain is Adenosine deaminase, found in Mycolicibacterium vanbaalenii (strain DSM 7251 / JCM 13017 / BCRC 16820 / KCTC 9966 / NRRL B-24157 / PYR-1) (Mycobacterium vanbaalenii).